The sequence spans 152 residues: Large ribosomal subunit protein bL9 (152 aa).

This sequence belongs to the bacterial ribosomal protein bL9 family.

Binds to the 23S rRNA. The sequence is that of Large ribosomal subunit protein bL9 from Nostoc sp. (strain PCC 7120 / SAG 25.82 / UTEX 2576).